A 340-amino-acid polypeptide reads, in one-letter code: Uroporphyrinogen decarboxylase (340 aa).

Residues 21–25 (RQAGR), D71, Y148, S203, and H316 each bind substrate.

Belongs to the uroporphyrinogen decarboxylase family. Homodimer.

The protein localises to the cytoplasm. It carries out the reaction uroporphyrinogen III + 4 H(+) = coproporphyrinogen III + 4 CO2. It functions in the pathway porphyrin-containing compound metabolism; protoporphyrin-IX biosynthesis; coproporphyrinogen-III from 5-aminolevulinate: step 4/4. In terms of biological role, catalyzes the decarboxylation of four acetate groups of uroporphyrinogen-III to yield coproporphyrinogen-III. This is Uroporphyrinogen decarboxylase from Campylobacter concisus (strain 13826).